The chain runs to 88 residues: UPF0297 protein SSA_2241 (88 aa).

The protein belongs to the UPF0297 family.

The sequence is that of UPF0297 protein SSA_2241 from Streptococcus sanguinis (strain SK36).